We begin with the raw amino-acid sequence, 417 residues long: UDP-N-acetylglucosamine 1-carboxyvinyltransferase (417 aa).

Position 22 to 23 (22 to 23) interacts with phosphoenolpyruvate; that stretch reads KN. Residue Arg-93 participates in UDP-N-acetyl-alpha-D-glucosamine binding. Cys-117 acts as the Proton donor in catalysis. Cys-117 bears the 2-(S-cysteinyl)pyruvic acid O-phosphothioketal mark. Residues 122-126, Asp-304, and Ile-326 contribute to the UDP-N-acetyl-alpha-D-glucosamine site; that span reads RPVDQ.

It belongs to the EPSP synthase family. MurA subfamily.

It is found in the cytoplasm. The enzyme catalyses phosphoenolpyruvate + UDP-N-acetyl-alpha-D-glucosamine = UDP-N-acetyl-3-O-(1-carboxyvinyl)-alpha-D-glucosamine + phosphate. Its pathway is cell wall biogenesis; peptidoglycan biosynthesis. In terms of biological role, cell wall formation. Adds enolpyruvyl to UDP-N-acetylglucosamine. This Neisseria meningitidis serogroup A / serotype 4A (strain DSM 15465 / Z2491) protein is UDP-N-acetylglucosamine 1-carboxyvinyltransferase.